A 240-amino-acid polypeptide reads, in one-letter code: UDP-2,3-diacylglucosamine hydrolase (240 aa).

Mn(2+) is bound by residues Asp-8, His-10, Asp-41, Asn-79, and His-114. A substrate-binding site is contributed by 79–80; sequence NR. Positions 122, 160, 164, 167, and 195 each coordinate substrate. Residues His-195 and His-197 each contribute to the Mn(2+) site.

This sequence belongs to the LpxH family. Mn(2+) serves as cofactor.

The protein resides in the cell inner membrane. It catalyses the reaction UDP-2-N,3-O-bis[(3R)-3-hydroxytetradecanoyl]-alpha-D-glucosamine + H2O = 2-N,3-O-bis[(3R)-3-hydroxytetradecanoyl]-alpha-D-glucosaminyl 1-phosphate + UMP + 2 H(+). Its pathway is glycolipid biosynthesis; lipid IV(A) biosynthesis; lipid IV(A) from (3R)-3-hydroxytetradecanoyl-[acyl-carrier-protein] and UDP-N-acetyl-alpha-D-glucosamine: step 4/6. Functionally, hydrolyzes the pyrophosphate bond of UDP-2,3-diacylglucosamine to yield 2,3-diacylglucosamine 1-phosphate (lipid X) and UMP by catalyzing the attack of water at the alpha-P atom. Involved in the biosynthesis of lipid A, a phosphorylated glycolipid that anchors the lipopolysaccharide to the outer membrane of the cell. The chain is UDP-2,3-diacylglucosamine hydrolase from Klebsiella pneumoniae subsp. pneumoniae (strain ATCC 700721 / MGH 78578).